Consider the following 340-residue polypeptide: S-adenosylmethionine:tRNA ribosyltransferase-isomerase (340 aa).

Belongs to the QueA family. Monomer.

The protein localises to the cytoplasm. It catalyses the reaction 7-aminomethyl-7-carbaguanosine(34) in tRNA + S-adenosyl-L-methionine = epoxyqueuosine(34) in tRNA + adenine + L-methionine + 2 H(+). The protein operates within tRNA modification; tRNA-queuosine biosynthesis. Its function is as follows. Transfers and isomerizes the ribose moiety from AdoMet to the 7-aminomethyl group of 7-deazaguanine (preQ1-tRNA) to give epoxyqueuosine (oQ-tRNA). The polypeptide is S-adenosylmethionine:tRNA ribosyltransferase-isomerase (Macrococcus caseolyticus (strain JCSC5402) (Macrococcoides caseolyticum)).